The sequence spans 99 residues: MADGLELSAELSVHTGTVTHTIFVYVFLGKSKRLKTFSDSNVGSVIKLEAGFAVWSRCEAANGEWMEADNEDRCRLYQIYRESKLKEFARYNVLSRVNW.

The chain crosses the membrane as a helical span at residues 10–29; sequence ELSVHTGTVTHTIFVYVFLG.

It is found in the membrane. This is an uncharacterized protein from Schizosaccharomyces pombe (strain 972 / ATCC 24843) (Fission yeast).